A 459-amino-acid polypeptide reads, in one-letter code: Jacalin-related lectin 12 (459 aa).

Jacalin-type lectin domains are found at residues 2–148 (SQDS…YFTP), 151–296 (PTRM…YITT), and 298–443 (TLTK…YSFP).

This sequence belongs to the jacalin lectin family.

This is Jacalin-related lectin 12 (JAL12) from Arabidopsis thaliana (Mouse-ear cress).